Consider the following 102-residue polypeptide: Small ribosomal subunit protein uS10 (102 aa).

The protein belongs to the universal ribosomal protein uS10 family. In terms of assembly, part of the 30S ribosomal subunit.

Its function is as follows. Involved in the binding of tRNA to the ribosomes. The polypeptide is Small ribosomal subunit protein uS10 (Streptococcus mutans serotype c (strain ATCC 700610 / UA159)).